Reading from the N-terminus, the 237-residue chain is MTPQDFYRTLEEDGFSLSSKQKEQFDTYFKSLVEWNTKINLTAITEENEVYLKHFYDSIAPILQGFLANEPIKLLDIGAGAGFPSLPMKILFPNLEVTIIDSLNKRISFLTLLAQELGLENVHFFHGRAEDFGQDKAFRGQFDVVTARAVARMQVLSELTIPFLKIGGKLIALKAQAADQELEEAKNALCLLFGKVIKNHSYQLPNGDSRFITIVEKKKETPNKYPRKAGLPNKKPL.

Residues G78, F83, 129–130, and R148 each bind S-adenosyl-L-methionine; that span reads AE.

This sequence belongs to the methyltransferase superfamily. RNA methyltransferase RsmG family.

The protein localises to the cytoplasm. Specifically methylates the N7 position of a guanine in 16S rRNA. This chain is Ribosomal RNA small subunit methyltransferase G, found in Streptococcus pyogenes serotype M1.